The sequence spans 58 residues: Large ribosomal subunit protein uL30 (58 aa).

The protein belongs to the universal ribosomal protein uL30 family. In terms of assembly, part of the 50S ribosomal subunit.

This is Large ribosomal subunit protein uL30 from Parabacteroides distasonis (strain ATCC 8503 / DSM 20701 / CIP 104284 / JCM 5825 / NCTC 11152).